The primary structure comprises 101 residues: MAKQSMKAREVKRVKLANKFYTQRHELKNIISNMSISEEERWNAVLKLQSFPRDSSPSRQRNRCRQTGRPHAFLRKFGLSRIKVREAAMKGEIPGLKKASW.

It belongs to the universal ribosomal protein uS14 family. Part of the 30S ribosomal subunit. Contacts proteins S3 and S10.

Binds 16S rRNA, required for the assembly of 30S particles and may also be responsible for determining the conformation of the 16S rRNA at the A site. This Buchnera aphidicola subsp. Acyrthosiphon pisum (strain APS) (Acyrthosiphon pisum symbiotic bacterium) protein is Small ribosomal subunit protein uS14.